We begin with the raw amino-acid sequence, 77 residues long: Ribonuclease P protein component 1 (77 aa).

This sequence belongs to the eukaryotic/archaeal RNase P protein component 1 family. Consists of a catalytic RNA component and at least 4-5 protein subunits.

It is found in the cytoplasm. The catalysed reaction is Endonucleolytic cleavage of RNA, removing 5'-extranucleotides from tRNA precursor.. Its function is as follows. Part of ribonuclease P, a protein complex that generates mature tRNA molecules by cleaving their 5'-ends. The chain is Ribonuclease P protein component 1 from Sulfurisphaera tokodaii (strain DSM 16993 / JCM 10545 / NBRC 100140 / 7) (Sulfolobus tokodaii).